The chain runs to 150 residues: Single-stranded DNA-binding protein 1 (150 aa).

The SSB domain maps to 1–104 (MINNVVLVGR…VVADTFQMLE (104 aa)). The segment covering 103–120 (LESNKTQGQQTSKPQAQN) has biased composition (polar residues). The interval 103–150 (LESNKTQGQQTSKPQAQNKKPQAPDPFKAPAADPFAGGTEISDDDLPF) is disordered. The segment covering 121-138 (KKPQAPDPFKAPAADPFA) has biased composition (low complexity). Residues 145–150 (DDDLPF) carry the Important for interaction with partner proteins motif.

Homotetramer.

In terms of biological role, plays an important role in DNA replication, recombination and repair. Binds to ssDNA and to an array of partner proteins to recruit them to their sites of action during DNA metabolism. The sequence is that of Single-stranded DNA-binding protein 1 (ssb1) from Lactococcus lactis subsp. lactis (strain IL1403) (Streptococcus lactis).